The sequence spans 2131 residues: Protein Ycf2 (2131 aa).

1466–1473 (GSIGTGRS) provides a ligand contact to ATP.

This sequence belongs to the Ycf2 family.

It localises to the plastid. It is found in the chloroplast stroma. Probable ATPase of unknown function. Its presence in a non-photosynthetic plant (Epifagus virginiana) and experiments in tobacco indicate that it has an essential function which is probably not related to photosynthesis. This is Protein Ycf2 from Helianthus annuus (Common sunflower).